A 280-amino-acid polypeptide reads, in one-letter code: Large ribosomal subunit protein uL2 (280 aa).

Disordered regions lie at residues 27 to 58 (STPEKSLVRPLHGHGGRNAHGRITTRHKGGGH) and 226 to 280 (MNPV…KHGR). Composition is skewed to basic residues over residues 37-58 (LHGHGGRNAHGRITTRHKGGGH) and 268-280 (IVRRRRTGKKHGR).

Belongs to the universal ribosomal protein uL2 family. In terms of assembly, part of the 50S ribosomal subunit. Forms a bridge to the 30S subunit in the 70S ribosome.

One of the primary rRNA binding proteins. Required for association of the 30S and 50S subunits to form the 70S ribosome, for tRNA binding and peptide bond formation. It has been suggested to have peptidyltransferase activity; this is somewhat controversial. Makes several contacts with the 16S rRNA in the 70S ribosome. The sequence is that of Large ribosomal subunit protein uL2 from Mycobacterium ulcerans (strain Agy99).